The following is a 610-amino-acid chain: Elongation factor 4 (610 aa).

The tr-type G domain maps to 13–195 (SHIRNFSIVA…AIVHKLPAPK (183 aa)). Residues 25–30 (DHGKST) and 142–145 (NKID) contribute to the GTP site.

It belongs to the TRAFAC class translation factor GTPase superfamily. Classic translation factor GTPase family. LepA subfamily.

It is found in the cell inner membrane. The enzyme catalyses GTP + H2O = GDP + phosphate + H(+). Functionally, required for accurate and efficient protein synthesis under certain stress conditions. May act as a fidelity factor of the translation reaction, by catalyzing a one-codon backward translocation of tRNAs on improperly translocated ribosomes. Back-translocation proceeds from a post-translocation (POST) complex to a pre-translocation (PRE) complex, thus giving elongation factor G a second chance to translocate the tRNAs correctly. Binds to ribosomes in a GTP-dependent manner. The polypeptide is Elongation factor 4 (Rhizobium johnstonii (strain DSM 114642 / LMG 32736 / 3841) (Rhizobium leguminosarum bv. viciae)).